Reading from the N-terminus, the 71-residue chain is Long neurotoxin 1 (71 aa).

Disulfide bonds link Cys-3–Cys-20, Cys-14–Cys-41, Cys-26–Cys-30, Cys-45–Cys-56, and Cys-57–Cys-62.

Belongs to the three-finger toxin family. Long-chain subfamily. Type II alpha-neurotoxin sub-subfamily. In terms of tissue distribution, expressed by the venom gland.

It localises to the secreted. Binds with high affinity to muscular (alpha-1/CHRNA1) and neuronal (alpha-7/CHRNA7) nicotinic acetylcholine receptor (nAChR) and inhibits acetylcholine from binding to the receptor, thereby impairing neuromuscular and neuronal transmission. This is Long neurotoxin 1 from Naja haje haje (Egyptian cobra).